The sequence spans 1273 residues: MVRLREIPRTAALAWSPGSASPYIATGTRAGAVDADFSNETDLELWDLALEQEGGSAELQPAAKLSTESGFHDLAWTESEDSSRGIIAGALENGSLDLWNADKLLSGASDPLVSRASQHSGPVKTLQFNPRHSNLLATGGSKGELFISDLNNIDHPFRLGNVNARLDDIECLDWNKKVPHILVTGSSAGFVTVWDVKTKKESLTLNNLGRKAVSAVAWDPEKPTKLITSIPLETDPLILVWDLRNSNAPERVLRGHESGVLSLSWCAQDPDLLLSSGKDNRTICWNPQTGVQYGEFPVVTNWTFLTRWNPHNPNMFATASFDGRISIQTIQNTKSDAIAQAGASQVQPVDDEDFFAKAQSQPQASTFSLPTAPKWLQRPSSVSFGFGGRVISVGLTDPSKPASRTSKVRITRFEVDSILSSTTQTFEEALKAGDLRRICETRIENAQNDSDRVDWKIIETLISDNPKMQLINYLGFSSEVDETADSLSKLGLGKSEDGGANGVPESDSRGPGVKKHKRLSSIFDTHADSDNFLTDLSASKGAKTNNPFQIYTGSESEADRGITRALLLGDFEKALDICLQEDRMSDAFMVAICGGQKCIDKAQEAYFQKQLEGPNYLRLMAAIVGKNLWDIVHNAGLANWKEAIATICTFATDAEFPDLCETLGDRLEEQAKAEGDKESRKNAAFCFLASSKLEKVVGIWIDELQENENKAIQEATNGETSFSIHVRALQNLIEKVTVFRHVTKFEDAETQKPSDWKLTLLYDKYIEYADVAAAHGQLGVAERYLDLLPQAHPAAVVARNRIKLATEKTTARSAPAHISAASHLTTKPPQQPNVPRGMYNPSAPMTQANNLFKPPAPMQVSNPYAPTGASSAYSPAGYQPSQQHQPTVPLGGPPQAFGTAQQSNIAPPPRAANQSPSTVTSYTQATNLPAWNDLPEGFAKALTPRRGTPSAAAATISSPFPHQQPPQPSQSPQTISPHQPPPPRQRTSMAVPPPPRGPAPPRMTSPPAVGQPHGFPSTRKTSLNFKCIYPTTQHTPTGPGMNVPQIPRGPSPYNAPPTGPPPSNRYAPSPAAQPSAPQPPRAAVAAPPPTGPPAPAPAQSPYSYQHPPPAHGSYAPPSAPTGARPDHQPQHQPPPPGSSPVSRPGTAQSQRKPAPAAKYPPGDRSHIPANAQPIFEILSADMQRVKARAPTSFKAQVNDAERRLNILFDHLNNEDLLKPATVESMAELARALQARDYETAQSIHLDIFTNRNDECGNWMVGVKRLIGMSRATP.

7 WD repeats span residues 5 to 47 (REIP…ELWD), 66 to 109 (STES…SGAS), 118 to 158 (QHSG…HPFR), 164 to 204 (ARLD…ESLT), 208 to 251 (LGRK…APER), 255 to 295 (GHES…QYGE), and 298 to 338 (VVTN…SDAI). Residues 383 to 411 (SFGFGGRVISVGLTDPSKPASRTSKVRIT) form a WD 8; interaction with SEC13 repeat. Disordered stretches follow at residues 489–515 (KLGLGKSEDGGANGVPESDSRGPGVKK), 808–921 (KTTA…TVTS), and 940–1168 (KALT…SHIP). Composition is skewed to polar residues over residues 859–886 (QVSNPYAPTGASSAYSPAGYQPSQQHQP) and 912–921 (ANQSPSTVTS). Low complexity predominate over residues 951 to 961 (AAAATISSPFP). Positions 991 to 1004 (VPPPPRGPAPPRMT) are enriched in pro residues. The span at 1018-1036 (TRKTSLNFKCIYPTTQHTP) shows a compositional bias: polar residues. Composition is skewed to pro residues over residues 1047-1063 (PRGPSPYNAPPTGPPPS) and 1076-1098 (APQPPRAAVAAPPPTGPPAPAPA).

The protein belongs to the WD repeat SEC31 family. As to quaternary structure, the COPII coat is composed of at least 5 proteins: the SEC23/24 complex, the SEC13/31 complex, and the protein SAR1. SEC13 and SEC31 make a 2:2 tetramer that forms the edge element of the COPII outer coat. The tetramer self-assembles in multiple copies to form the complete polyhedral cage. Interacts (via WD 8) with SEC13.

Its subcellular location is the cytoplasmic vesicle. The protein resides in the COPII-coated vesicle membrane. It is found in the endoplasmic reticulum membrane. Its function is as follows. Component of the coat protein complex II (COPII) which promotes the formation of transport vesicles from the endoplasmic reticulum (ER). The coat has two main functions, the physical deformation of the endoplasmic reticulum membrane into vesicles and the selection of cargo molecules. This is Protein transport protein SEC31 (SEC31) from Ajellomyces capsulatus (Darling's disease fungus).